Here is a 255-residue protein sequence, read N- to C-terminus: 4-hydroxy-tetrahydrodipicolinate reductase (255 aa).

NAD(+) contacts are provided by residues 9–14 (GFKGKM), 89–91 (GTT), and 115–118 (APNF). Catalysis depends on His145, which acts as the Proton donor/acceptor. His146 serves as a coordination point for (S)-2,3,4,5-tetrahydrodipicolinate. Lys149 acts as the Proton donor in catalysis. 155–156 (GT) contacts (S)-2,3,4,5-tetrahydrodipicolinate.

This sequence belongs to the DapB family.

The protein resides in the cytoplasm. The enzyme catalyses (S)-2,3,4,5-tetrahydrodipicolinate + NAD(+) + H2O = (2S,4S)-4-hydroxy-2,3,4,5-tetrahydrodipicolinate + NADH + H(+). It carries out the reaction (S)-2,3,4,5-tetrahydrodipicolinate + NADP(+) + H2O = (2S,4S)-4-hydroxy-2,3,4,5-tetrahydrodipicolinate + NADPH + H(+). Its pathway is amino-acid biosynthesis; L-lysine biosynthesis via DAP pathway; (S)-tetrahydrodipicolinate from L-aspartate: step 4/4. Catalyzes the conversion of 4-hydroxy-tetrahydrodipicolinate (HTPA) to tetrahydrodipicolinate. The sequence is that of 4-hydroxy-tetrahydrodipicolinate reductase from Streptococcus gordonii (strain Challis / ATCC 35105 / BCRC 15272 / CH1 / DL1 / V288).